Consider the following 316-residue polypeptide: Ribosomal RNA small subunit methyltransferase H (316 aa).

Residues 35–37, Asp-55, Phe-84, Asp-105, and Gln-112 each bind S-adenosyl-L-methionine; that span reads SGH.

It belongs to the methyltransferase superfamily. RsmH family.

The protein localises to the cytoplasm. The enzyme catalyses cytidine(1402) in 16S rRNA + S-adenosyl-L-methionine = N(4)-methylcytidine(1402) in 16S rRNA + S-adenosyl-L-homocysteine + H(+). In terms of biological role, specifically methylates the N4 position of cytidine in position 1402 (C1402) of 16S rRNA. The sequence is that of Ribosomal RNA small subunit methyltransferase H from Streptococcus pyogenes serotype M49 (strain NZ131).